The sequence spans 335 residues: Phospho-N-acetylmuramoyl-pentapeptide-transferase (335 aa).

A run of 10 helical transmembrane segments spans residues 3 to 23, 53 to 73, 78 to 98, 118 to 138, 143 to 163, 175 to 195, 200 to 220, 226 to 246, 251 to 271, and 314 to 334; these read LTLI…PHFI, GGTV…ILFF, SMGL…IGFL, LSLQ…PSGI, VFGF…FWVV, IDGL…VIAI, YDVL…FIFN, VFMG…ISIA, WTLL…MLQV, and VDAF…AILY.

Belongs to the glycosyltransferase 4 family. MraY subfamily. Requires Mg(2+) as cofactor.

Its subcellular location is the cell membrane. The catalysed reaction is UDP-N-acetyl-alpha-D-muramoyl-L-alanyl-gamma-D-glutamyl-L-lysyl-D-alanyl-D-alanine + di-trans,octa-cis-undecaprenyl phosphate = Mur2Ac(oyl-L-Ala-gamma-D-Glu-L-Lys-D-Ala-D-Ala)-di-trans,octa-cis-undecaprenyl diphosphate + UMP. It functions in the pathway cell wall biogenesis; peptidoglycan biosynthesis. Its function is as follows. Catalyzes the initial step of the lipid cycle reactions in the biosynthesis of the cell wall peptidoglycan: transfers peptidoglycan precursor phospho-MurNAc-pentapeptide from UDP-MurNAc-pentapeptide onto the lipid carrier undecaprenyl phosphate, yielding undecaprenyl-pyrophosphoryl-MurNAc-pentapeptide, known as lipid I. The polypeptide is Phospho-N-acetylmuramoyl-pentapeptide-transferase (Streptococcus uberis (strain ATCC BAA-854 / 0140J)).